Reading from the N-terminus, the 294-residue chain is Ribosomal RNA small subunit methyltransferase H (294 aa).

S-adenosyl-L-methionine-binding positions include 31–33, aspartate 49, phenylalanine 76, aspartate 97, and glutamine 104; that span reads GGY.

This sequence belongs to the methyltransferase superfamily. RsmH family.

The protein resides in the cytoplasm. It catalyses the reaction cytidine(1402) in 16S rRNA + S-adenosyl-L-methionine = N(4)-methylcytidine(1402) in 16S rRNA + S-adenosyl-L-homocysteine + H(+). Functionally, specifically methylates the N4 position of cytidine in position 1402 (C1402) of 16S rRNA. This chain is Ribosomal RNA small subunit methyltransferase H, found in Wolbachia pipientis subsp. Culex pipiens (strain wPip).